The chain runs to 526 residues: Lysine--tRNA ligase (526 aa).

Mg(2+)-binding residues include Glu-431 and Glu-438.

The protein belongs to the class-II aminoacyl-tRNA synthetase family. As to quaternary structure, homodimer. The cofactor is Mg(2+).

It localises to the cytoplasm. The catalysed reaction is tRNA(Lys) + L-lysine + ATP = L-lysyl-tRNA(Lys) + AMP + diphosphate. This Chlamydia trachomatis serovar L2b (strain UCH-1/proctitis) protein is Lysine--tRNA ligase.